A 243-amino-acid chain; its full sequence is Aliphatic sulfonates import ATP-binding protein SsuB (243 aa).

Positions 11-230 constitute an ABC transporter domain; sequence ATVRGLRKSY…RTHPSFASYT (220 aa). 43–50 provides a ligand contact to ATP; the sequence is GRSGSGKS.

Belongs to the ABC transporter superfamily. Aliphatic sulfonates importer (TC 3.A.1.17.2) family. The complex is composed of two ATP-binding proteins (SsuB), two transmembrane proteins (SsuC) and a solute-binding protein (SsuA).

Its subcellular location is the cell membrane. The enzyme catalyses ATP + H2O + aliphatic sulfonate-[sulfonate-binding protein]Side 1 = ADP + phosphate + aliphatic sulfonateSide 2 + [sulfonate-binding protein]Side 1.. Part of the ABC transporter complex SsuABC involved in aliphatic sulfonates import. Responsible for energy coupling to the transport system. Is also involved in taurine transport. Seems to not be involved in long chain aliphatic sulfonates transport (chain length of eight carbon atoms or more). The polypeptide is Aliphatic sulfonates import ATP-binding protein SsuB (Corynebacterium glutamicum (strain ATCC 13032 / DSM 20300 / JCM 1318 / BCRC 11384 / CCUG 27702 / LMG 3730 / NBRC 12168 / NCIMB 10025 / NRRL B-2784 / 534)).